A 155-amino-acid polypeptide reads, in one-letter code: Ribosomal RNA large subunit methyltransferase H (155 aa).

S-adenosyl-L-methionine is bound by residues L73, G104, and 123–128 (LSPLTL).

It belongs to the RNA methyltransferase RlmH family. In terms of assembly, homodimer.

It is found in the cytoplasm. The enzyme catalyses pseudouridine(1915) in 23S rRNA + S-adenosyl-L-methionine = N(3)-methylpseudouridine(1915) in 23S rRNA + S-adenosyl-L-homocysteine + H(+). In terms of biological role, specifically methylates the pseudouridine at position 1915 (m3Psi1915) in 23S rRNA. This chain is Ribosomal RNA large subunit methyltransferase H, found in Pseudomonas aeruginosa (strain LESB58).